A 232-amino-acid chain; its full sequence is Large ribosomal subunit protein uL1 (232 aa).

Belongs to the universal ribosomal protein uL1 family. Part of the 50S ribosomal subunit.

Binds directly to 23S rRNA. The L1 stalk is quite mobile in the ribosome, and is involved in E site tRNA release. Its function is as follows. Protein L1 is also a translational repressor protein, it controls the translation of the L11 operon by binding to its mRNA. This Rhizorhabdus wittichii (strain DSM 6014 / CCUG 31198 / JCM 15750 / NBRC 105917 / EY 4224 / RW1) (Sphingomonas wittichii) protein is Large ribosomal subunit protein uL1.